Consider the following 157-residue polypeptide: Small ribosomal subunit protein uS7 (157 aa).

It belongs to the universal ribosomal protein uS7 family. Part of the 30S ribosomal subunit. Contacts proteins S9 and S11.

Functionally, one of the primary rRNA binding proteins, it binds directly to 16S rRNA where it nucleates assembly of the head domain of the 30S subunit. Is located at the subunit interface close to the decoding center, probably blocks exit of the E-site tRNA. The sequence is that of Small ribosomal subunit protein uS7 from Psychrobacter cryohalolentis (strain ATCC BAA-1226 / DSM 17306 / VKM B-2378 / K5).